Consider the following 498-residue polypeptide: Myocyte-specific enhancer factor 2A (498 aa).

The MADS-box domain occupies 3 to 57 (RKKIQITRIMDERNRQVTFTKRKFGLMKKAYELSVLCDCEIALIIFNSSNKLFQY). Positions 58–86 (ASTDMDKVLLKYTEYNEPHESRTNSDIVE) form a DNA-binding region, mef2-type. The residue at position 59 (serine 59) is a Phosphoserine; by CK2. Serine 98 and serine 108 each carry phosphoserine. At serine 108 the chain carries Phosphothreonine. The tract at residues 172 to 220 (LADSSMLSPPPATLHRNVSPGAPQRPPSTGSASGMLSTTDLTVPNGAGN) is disordered. Polar residues predominate over residues 198 to 220 (PSTGSASGMLSTTDLTVPNGAGN). Serine 233 carries the phosphoserine modification. The tract at residues 240-268 (TGANSLGKVMPTKSPPPPGGGSLGMNSRK) is disordered. Residue lysine 247 is modified to N6-acetyllysine. Serine 253 bears the Phosphoserine mark. Positions 264-281 (MNSRKPDLRVVIPPSSKG) are required for interaction with MAPKs. Residues 287-294 (SEEEELEL) are beta domain. Phosphothreonine; by MAPK7 occurs at positions 310 and 317. Threonine 310 is subject to Phosphothreonine; by NLK. Serine 353 is modified (phosphoserine; by MAPK7). Polar residues predominate over residues 388 to 400 (SNLSINTNQNINI). The segment at 388 to 498 (SNLSINTNQN…KRMRMDTWVT (111 aa)) is disordered. The residue at position 401 (lysine 401) is an N6-acetyllysine; alternate. Residue lysine 401 forms a Glycyl lysine isopeptide (Lys-Gly) (interchain with G-Cter in SUMO); alternate linkage. Serine 406 carries the phosphoserine modification. Residue threonine 413 is modified to Phosphothreonine. Pro residues predominate over residues 426–436 (QQPPPQPPQPQ). Serine 444 bears the Phosphoserine mark. The span at 444-457 (SPVDSLSSSSSSYD) shows a compositional bias: low complexity. Basic and acidic residues-rich tracts occupy residues 458–468 (GSDREDPRGDF) and 479–498 (NTEDRESPSVKRMRMDTWVT).

This sequence belongs to the MEF2 family. In terms of assembly, binds DNA as a homo- or heterodimer. Dimerizes with MEF2D. Interacts with HDAC7. Interacts with PIAS1; the interaction enhances sumoylation. Interacts with HDAC4, HDAC9 and SLC2A4RG. Interacts (via the N-terminal) with MAPK7; the interaction results in the phosphorylation and transcriptional activity of MEF2A. Post-translationally, constitutive phosphorylation on Ser-406 promotes Lys-401 sumoylation thus preventing acetylation at this site. Dephosphorylation on Ser-406 by PPP3CA upon neuron depolarization promotes a switch from sumoylation to acetylation on residue Lys-403 leading to inhibition of dendrite claw differentiation. Phosphorylation on Thr-312 and Thr-319 are the main sites involved in p38 MAPK signaling and activate transcription. Phosphorylated on these sites by MAPK14/p38alpha and MAPK11/p38beta, but not by MAPK13/p38delta nor by MAPK12/p38gamma. Phosphorylation on Ser-408 by CDK5 induced by neurotoxicity inhibits MEF2A transcriptional activation leading to apoptosis of cortical neurons. Phosphorylation on Thr-312, Thr-319 and Ser-355 can be induced by EGF. Isoform 3 is phosphorylated on Ser-98 and Thr-108. In terms of processing, sumoylation on Lys-401 is enhanced by PIAS1 and represses transcriptional activity. Phosphorylation on Ser-406 is required for sumoylation. Has no effect on nuclear location nor on DNA binding. Sumoylated with SUMO1 and, to a lesser extent with SUMO2 and SUMO3. PIASx facilitates sumoylation in postsynaptic dendrites in the cerebellar cortex and promotes their morphogenesis. Acetylation on Lys-401 activates transcriptional activity. Acetylated by p300 on several sites in diffentiating myocytes. Acetylation on Lys-4 increases DNA binding and transactivation. Hyperacetylation by p300 leads to enhanced cardiac myocyte growth and heart failure. Post-translationally, proteolytically cleaved in cerebellar granule neurons on several sites by caspase 3 and caspase 7 following neurotoxicity. Preferentially cleaves the CDK5-mediated hyperphosphorylated form which leads to neuron apoptosis and transcriptional inactivation. As to expression, widely expressed though mainly restricted to skeletal and cardiac muscle, brain, neurons and lymphocytes. Differentially expressed depending on if isoforms contain the beta domain or not, with the total expression of the beta domain-lacking isoforms vastly exceeding that of the beta domain-containing isoforms. Isoforms containing the beta domain are expressed primarily in skeletal and cardiac muscle and in brain. Also present in lung and testis. Splicing to include the beta domain is induced in differentiating myocytes. Isoforms lacking the beta domain are expressed less abundantly in skeletal muscle, brain and lymphocytes, and are uniquely found in ovary, liver, spleen and kidney. In embryos, the beta domain-containing and beta domain-lacking isoforms are equally expressed. Also expressed cerebellar granule neurons and other regions of the CNS. Highest levels in the olfactory bulb, cortex, hippocampus, thalamus and cerebellum.

The protein localises to the nucleus. Transcriptional activator which binds specifically to the MEF2 element, 5'-YTA[AT](4)TAR-3', found in numerous muscle-specific genes. Also involved in the activation of numerous growth factor- and stress-induced genes. Mediates cellular functions not only in skeletal and cardiac muscle development, but also in neuronal differentiation and survival. Plays diverse roles in the control of cell growth, survival and apoptosis via p38 MAPK signaling in muscle-specific and/or growth factor-related transcription. In cerebellar granule neurons, phosphorylated and sumoylated MEF2A represses transcription of NUR77 promoting synaptic differentiation. Associates with chromatin to the ZNF16 promoter. This chain is Myocyte-specific enhancer factor 2A (Mef2a), found in Mus musculus (Mouse).